Reading from the N-terminus, the 442-residue chain is Trigger factor (442 aa).

Residues 163–248 (GDQVVIDFLG…IKEVKAPKAA (86 aa)) enclose the PPIase FKBP-type domain.

The protein belongs to the FKBP-type PPIase family. Tig subfamily.

The protein localises to the cytoplasm. It catalyses the reaction [protein]-peptidylproline (omega=180) = [protein]-peptidylproline (omega=0). Functionally, involved in protein export. Acts as a chaperone by maintaining the newly synthesized protein in an open conformation. Functions as a peptidyl-prolyl cis-trans isomerase. The chain is Trigger factor from Dinoroseobacter shibae (strain DSM 16493 / NCIMB 14021 / DFL 12).